The primary structure comprises 375 residues: 4,4'-diaponeurosporenoate glycosyltransferase (375 aa).

Transmembrane regions (helical) follow at residues 3–23 (WLSR…ALIF), 164–184 (FYEG…NVFS), 277–297 (IMAA…GLCL), and 330–350 (FSNL…KIFI).

Belongs to the glycosyltransferase 2 family. CrtQ subfamily.

It localises to the cell membrane. It functions in the pathway carotenoid biosynthesis; staphyloxanthin biosynthesis; staphyloxanthin from farnesyl diphosphate: step 4/5. Its function is as follows. Catalyzes the glycosylation of 4,4'-diaponeurosporenoate, i.e. the esterification of glucose at the C1'' position with the carboxyl group of 4,4'-diaponeurosporenic acid, to form glycosyl-4,4'-diaponeurosporenoate. This is a step in the biosynthesis of staphyloxanthin, an orange pigment present in most staphylococci strains. The polypeptide is 4,4'-diaponeurosporenoate glycosyltransferase (crtQ) (Staphylococcus aureus (strain bovine RF122 / ET3-1)).